The following is a 491-amino-acid chain: UDP-N-acetylmuramate--L-alanine ligase (491 aa).

ATP is bound at residue 126–132 (GTHGKTT).

The protein belongs to the MurCDEF family.

It localises to the cytoplasm. The catalysed reaction is UDP-N-acetyl-alpha-D-muramate + L-alanine + ATP = UDP-N-acetyl-alpha-D-muramoyl-L-alanine + ADP + phosphate + H(+). The protein operates within cell wall biogenesis; peptidoglycan biosynthesis. In terms of biological role, cell wall formation. The polypeptide is UDP-N-acetylmuramate--L-alanine ligase (Salmonella typhimurium (strain LT2 / SGSC1412 / ATCC 700720)).